Reading from the N-terminus, the 757-residue chain is Receptor protein kinase-like protein At4g34220 (757 aa).

A signal peptide spans 1 to 26 (MTSNRSNLLFSLVLFHFLFVPTQLQA). 7 LRR repeats span residues 104–126 (YLRI…VFNA), 128–150 (ELQS…VNSV), 152–174 (NLQL…ISLL), 176–198 (NLTV…FEAA), 199–219 (QILD…LGGK), 220–242 (SLHY…FAEK), and 245–267 (ANAT…LSLL). Residues 339–359 (IAAITVADIVGLAFIGLLVLY) traverse the membrane as a helical segment. The Protein kinase domain maps to 471-753 (KASAYILGTT…KELVQVLEKI (283 aa)). At S473 the chain carries Phosphoserine. T494 bears the Phosphothreonine mark. Phosphoserine is present on S553. A disordered region spans residues 633–654 (ARESHTTGPTSSSPYQPPEWST). Phosphothreonine occurs at positions 638 and 639. A compositionally biased stretch (polar residues) spans 638 to 654 (TTGPTSSSPYQPPEWST).

Belongs to the protein kinase superfamily.

It localises to the membrane. In Arabidopsis thaliana (Mouse-ear cress), this protein is Receptor protein kinase-like protein At4g34220.